We begin with the raw amino-acid sequence, 36 residues long: Light-harvesting protein B-1015 gamma chain (36 aa).

In terms of biological role, one of the components of the bacteriochlorophyll-protein complex in the chromatophore membrane. The protein is Light-harvesting protein B-1015 gamma chain of Blastochloris viridis (Rhodopseudomonas viridis).